The following is a 591-amino-acid chain: Metalloendopeptidase OPG085 (591 aa).

H41 lines the Zn(2+) pocket. E44 is an active-site residue. Residues H45 and E112 each contribute to the Zn(2+) site.

This sequence belongs to the peptidase M44 family. Requires Zn(2+) as cofactor. Post-translationally, undergoes proteolytic processing during the course of infection. May be cleaved into 46 kDa and 22 kDa products (Potential).

It is found in the virion. Its function is as follows. Probably involved in maturation of some viral proteins by processing them preferentially at Ala-Gly-|-Ser/Thr/Lys motifs. Does not seem to be responsible for the cleavage of major core proteins. This is Metalloendopeptidase OPG085 (OPG085) from Variola virus (isolate Human/India/Ind3/1967) (VARV).